The sequence spans 145 residues: D-aminoacyl-tRNA deacylase (145 aa).

A Gly-cisPro motif, important for rejection of L-amino acids motif is present at residues 137 to 138 (GP).

The protein belongs to the DTD family. As to quaternary structure, homodimer.

The protein localises to the cytoplasm. It catalyses the reaction glycyl-tRNA(Ala) + H2O = tRNA(Ala) + glycine + H(+). The enzyme catalyses a D-aminoacyl-tRNA + H2O = a tRNA + a D-alpha-amino acid + H(+). Its function is as follows. An aminoacyl-tRNA editing enzyme that deacylates mischarged D-aminoacyl-tRNAs. Also deacylates mischarged glycyl-tRNA(Ala), protecting cells against glycine mischarging by AlaRS. Acts via tRNA-based rather than protein-based catalysis; rejects L-amino acids rather than detecting D-amino acids in the active site. By recycling D-aminoacyl-tRNA to D-amino acids and free tRNA molecules, this enzyme counteracts the toxicity associated with the formation of D-aminoacyl-tRNA entities in vivo and helps enforce protein L-homochirality. The sequence is that of D-aminoacyl-tRNA deacylase from Rhodopirellula baltica (strain DSM 10527 / NCIMB 13988 / SH1).